A 510-amino-acid polypeptide reads, in one-letter code: Histidine ammonia-lyase (510 aa).

A cross-link (5-imidazolinone (Ala-Gly)) is located at residues alanine 143–glycine 145. Serine 144 is subject to 2,3-didehydroalanine (Ser).

It belongs to the PAL/histidase family. Post-translationally, contains an active site 4-methylidene-imidazol-5-one (MIO), which is formed autocatalytically by cyclization and dehydration of residues Ala-Ser-Gly.

It localises to the cytoplasm. It catalyses the reaction L-histidine = trans-urocanate + NH4(+). The protein operates within amino-acid degradation; L-histidine degradation into L-glutamate; N-formimidoyl-L-glutamate from L-histidine: step 1/3. The chain is Histidine ammonia-lyase from Psychromonas ingrahamii (strain DSM 17664 / CCUG 51855 / 37).